We begin with the raw amino-acid sequence, 98 residues long: Protein S100-A13 (98 aa).

One can recognise an EF-hand domain in the interval 18–53; it reads TTFFTFAGREGRKGSLSVNEFKELVTQQLPHLLKDV. Ca(2+) is bound by residues S32, E37, D64, N66, D68, E70, and E75. Phosphoserine is present on S32.

Belongs to the S-100 family. Homodimer. Part of a copper-dependent multiprotein complex containing S100A13, FGF1 and SYT1. Interacts with FGF1 and SYT1. Interacts with IL1A.

The protein localises to the cytoplasm. Its subcellular location is the secreted. In terms of biological role, plays a role in the export of proteins that lack a signal peptide and are secreted by an alternative pathway. Binds two calcium ions per subunit. Binds one copper ion. Binding of one copper ion does not interfere with calcium binding. Required for the copper-dependent stress-induced export of IL1A and FGF1. The calcium-free protein binds to lipid vesicles containing phosphatidylserine, but not to vesicles containing phosphatidylcholine. The chain is Protein S100-A13 (S100A13) from Bos taurus (Bovine).